Consider the following 291-residue polypeptide: MASVALSEAEKVYIVHGVQEDLRVDGRGCEDYRCVEVETDVVSNTSGSARVKLGHTDILVGVKAEMGTPKLEKPNEGYLEFFVDCSANATPEFEGRGGDDLGTEIANTLYRIFNNKSSVDLRSLCISPREHCWVLYVDVLLLECGGNLFDAISIAVKAALFNTRIPRVRVLEDEEGAKDIELSDDPYDCIRLSVENVPCIVTLCKIGCRHVVDATLQEEACSLASLLVSVTSKGVVTCMRKVGKGSLDPESIFEMMESSKRVGKVLHVSLQSLLHKEESLGPKRPRVGFLG.

Position 2 is an N-acetylalanine (Ala-2). Position 116 is an N6-acetyllysine (Lys-116).

Belongs to the RNase PH family. In terms of assembly, component of the RNA exosome core complex (Exo-9), composed of EXOSC1, EXOSC2, EXOSC3, EXOSC4, EXOSC5, EXOSC6, EXOSC7, EXOSC8 and EXOSC9; within the complex interacts with EXOSC2 and EXOSC4. The catalytically inactive RNA exosome core complex (Exo-9) associates with the catalytic subunit EXOSC10/RRP6. Exo-9 may associate with DIS3 to form the nucleolar exosome complex, or DIS3L to form the cytoplasmic exosome complex. Exo-9 is formed by a hexameric base ring consisting of the heterodimers EXOSC4-EXOSC9, EXOSC5-EXOSC8 and EXOSC6-EXOSC7, and a cap ring consisting of EXOSC1, EXOSC2 and EXOSC3. The RNA exosome complex associates with cofactors C1D/RRP47, MPHOSPH6/MPP6 and MTREX/MTR4. Interacts with ZC3HAV1. Interacts with DIS3; the interaction is direct.

It is found in the nucleus. The protein resides in the nucleolus. Its subcellular location is the cytoplasm. Non-catalytic component of the RNA exosome complex which has 3'-&gt;5' exoribonuclease activity and participates in a multitude of cellular RNA processing and degradation events. In the nucleus, the RNA exosome complex is involved in proper maturation of stable RNA species such as rRNA, snRNA and snoRNA, in the elimination of RNA processing by-products and non-coding 'pervasive' transcripts, such as antisense RNA species and promoter-upstream transcripts (PROMPTs), and of mRNAs with processing defects, thereby limiting or excluding their export to the cytoplasm. The RNA exosome may be involved in Ig class switch recombination (CSR) and/or Ig variable region somatic hypermutation (SHM) by targeting AICDA deamination activity to transcribed dsDNA substrates. In the cytoplasm, the RNA exosome complex is involved in general mRNA turnover and specifically degrades inherently unstable mRNAs containing AU-rich elements (AREs) within their 3' untranslated regions, and in RNA surveillance pathways, preventing translation of aberrant mRNAs. It seems to be involved in degradation of histone mRNA. The catalytic inactive RNA exosome core complex of 9 subunits (Exo-9) is proposed to play a pivotal role in the binding and presentation of RNA for ribonucleolysis, and to serve as a scaffold for the association with catalytic subunits and accessory proteins or complexes. The sequence is that of Exosome complex exonuclease RRP42 (Exosc7) from Mus musculus (Mouse).